The primary structure comprises 208 residues: ER membrane protein complex subunit 8/9 homolog (208 aa).

One can recognise an MPN domain in the interval Tyr11–Val146.

Belongs to the EMC8/EMC9 family.

The polypeptide is ER membrane protein complex subunit 8/9 homolog (EMB2731) (Arabidopsis thaliana (Mouse-ear cress)).